The chain runs to 251 residues: Mlc titration factor A (251 aa).

Zn(2+) contacts are provided by His111, His148, His152, and Glu211.

The protein belongs to the MtfA family. In terms of assembly, interacts with Mlc. Requires Zn(2+) as cofactor.

The protein resides in the cytoplasm. Involved in the modulation of the activity of the glucose-phosphotransferase system (glucose-PTS). Interacts with the transcriptional repressor Mlc, preventing its interaction with DNA and leading to the modulation of expression of genes regulated by Mlc, including ptsG, which encodes the PTS system glucose-specific EIICB component. Functionally, shows zinc-dependent metallopeptidase activity. The polypeptide is Mlc titration factor A (Salmonella arizonae (strain ATCC BAA-731 / CDC346-86 / RSK2980)).